The following is a 531-amino-acid chain: MNILDVMKIPAFENANLIAGKAGGEREVQHVNMMDAPDIVDFLHKNELLVTTAYHLKDHPHQLSELIRQMAKRGCAGLGIKTKRYLEDIPKEIIELADSYAFPIIELPEHIRLGDIVNATLSHILDMRSNELQQAIYAHKKFTNHIMSGKGLQSLLKKVSDILQLPVLLLDQHAKMLSASHQISVETEKLKGTLNTVSGPFFTCFSTISDQKTYSVLPIYNHEKNCGYLLIPDMVQAGDKGLILTIEQAANVISFELLKENALKQFSRRARNEFFNNFIERTFSSDDEIKNRAKEFKLRWDQKYMCIAGKLDRNDESISFTENQLASDSVFEFLEGELSAFPFPPHFFMKGNVGIILIEATDSWSEMHASVISFLEQFQTQVSAQFKRTVSFGISNICQKLIDVPDAFTEASDALQSGHLSRSTAFIQVYHAKDVPELLRLLPVEDLKKFYNSTLQSLAEKQQEDQSLLHTLSVYLETHCQISETAKRLYVHRNTVIYRLEKCEELLGKSLKDPETTMRLRLALRMQRLIS.

The protein belongs to the CdaR family.

In terms of biological role, activates the expression of pucFG, pucH, pucI, pucJKLM and guaD, while it represses pucABCDE and its own expression. This Bacillus subtilis (strain 168) protein is Purine catabolism regulatory protein (pucR).